The sequence spans 332 residues: DNA-directed RNA polymerase subunit alpha (332 aa).

Residues Met1–Glu244 form an alpha N-terminal domain (alpha-NTD) region. The interval Ile259–Asn332 is alpha C-terminal domain (alpha-CTD).

This sequence belongs to the RNA polymerase alpha chain family. As to quaternary structure, homodimer. The RNAP catalytic core consists of 2 alpha, 1 beta, 1 beta' and 1 omega subunit. When a sigma factor is associated with the core the holoenzyme is formed, which can initiate transcription.

It catalyses the reaction RNA(n) + a ribonucleoside 5'-triphosphate = RNA(n+1) + diphosphate. In terms of biological role, DNA-dependent RNA polymerase catalyzes the transcription of DNA into RNA using the four ribonucleoside triphosphates as substrates. This chain is DNA-directed RNA polymerase subunit alpha, found in Mesomycoplasma hyopneumoniae (strain 7448) (Mycoplasma hyopneumoniae).